An 82-amino-acid chain; its full sequence is uncharacterized protein (82 aa).

Helical transmembrane passes span 4 to 26, 31 to 48, and 52 to 74; these read LDIA…TCIC, LMPM…FTIF, and FLGW…LIVV.

Its subcellular location is the cell membrane. This is an uncharacterized protein from Bacillus subtilis (strain 168).